A 439-amino-acid polypeptide reads, in one-letter code: MVTLTPSSASTPKTSFDFMKNNNSHSSLYVSSSSYLSSKEDALVTTKKLMEPSKTLNMSINPKQEEFGDEKKMVKKAPEDPEIGVFGAEKYFNGDMDSDQGSSVLSLTNPEVERTVVDSKQSAKKSTGTPSVRSESSWNSQSVLLQNKLVNSCNSSFKEKKNSNGQIQKVTNNKKSFLANLGCKCACSDGDSVDVEEKTSVKRSADPNISVITMRSSADMNTELIKIQKQEELSQRKSLEVFGSPVAIEKKSSVVQKKLPLPPWKSRTEEDDTKSEGSDSSSDLFEIEGLTGNPKPFLTRQGSDPASPTCYAPSEVSVEWSIVTASAADFSVMSECATSPVRRNRPTQIPRIPITAKSAPQRRKSSSSSGGNGFLMSCKSHKSVMVSGDLDRRSSMNKTQPSYVPRFPMETTKPKSFETRRRISNSSISHTQSSLLYSQ.

Residues 1–14 are compositionally biased toward polar residues; the sequence is MVTLTPSSASTPKT. Disordered regions lie at residues 1–22, 54–80, and 100–139; these read MVTL…MKNN, KTLN…APED, and QGSS…SSWN. Residues 63–79 show a composition bias toward basic and acidic residues; sequence KQEEFGDEKKMVKKAPE. 2 stretches are compositionally biased toward polar residues: residues 100–109 and 118–139; these read QGSSVLSLTN and DSKQ…SSWN. 2 positions are modified to phosphoserine: Ser238 and Ser244. 2 disordered regions span residues 259-311 and 355-439; these read LPLP…PTCY and TAKS…LYSQ. Residues 412–421 show a composition bias toward basic and acidic residues; it reads TKPKSFETRR. Positions 424–439 are enriched in low complexity; that stretch reads SNSSISHTQSSLLYSQ.

The protein belongs to the PKS family. In terms of assembly, interacts with PKS2, RPT3, PHOT1, PHOT2 and the C-termini of both phytochromes A (phyA) and B (phyB). Binds both spectral forms of phytochrome, Pr and Pfr. Phosphorylated on Ser and to a lower extent on Thr by phytochromes. Phosphorylation is stimulated twofold by red light. As to expression, expressed in young seedlings in both darkness and light. Moderate in leaves and very low in roots and flowers. Expressed in the elongation zone of the root and hypocotyl.

The protein localises to the cell membrane. In terms of biological role, may be responsible for light-regulated cytoplasmic sequestration of phytochromes or may be a negative regulator of phytochrome B signaling. Component of the network that modulates the very low-fluence response (VLFR) branch of phyA signaling. Acts positively in PHOT1 signaling. Regulates phytochrome-mediated photomorphogenesis and hypocotyl phototropism. Involved in the control of leaf flattening and leaf positioning. Promotes negative root phototropism and negatively regulates root gravitropism. May act by controlling auxin homeostasis. In Arabidopsis thaliana (Mouse-ear cress), this protein is Protein PHYTOCHROME KINASE SUBSTRATE 1 (PKS1).